The following is a 299-amino-acid chain: GTPase Era (299 aa).

The region spanning 5–172 (KSGFVSIIGR…IDVLKTYLPE (168 aa)) is the Era-type G domain. The interval 13–20 (GRPNVGKS) is G1. 13–20 (GRPNVGKS) provides a ligand contact to GTP. The interval 39–43 (QTTRN) is G2. Positions 60–63 (DTPG) are G3. GTP is bound by residues 60–64 (DTPGI) and 122–125 (NKID). A G4 region spans residues 122–125 (NKID). The G5 stretch occupies residues 151–153 (ISA). In terms of domain architecture, KH type-2 spans 203-280 (TSEEIPHAIG…YLELWVKVQR (78 aa)).

Belongs to the TRAFAC class TrmE-Era-EngA-EngB-Septin-like GTPase superfamily. Era GTPase family. As to quaternary structure, monomer.

The protein localises to the cytoplasm. The protein resides in the cell membrane. Functionally, an essential GTPase that binds both GDP and GTP, with rapid nucleotide exchange. Plays a role in 16S rRNA processing and 30S ribosomal subunit biogenesis and possibly also in cell cycle regulation and energy metabolism. The protein is GTPase Era of Staphylococcus aureus (strain bovine RF122 / ET3-1).